The primary structure comprises 398 residues: O-methyltransferase aoiO (398 aa).

Aspartate 251 contacts S-adenosyl-L-methionine. The Proton acceptor role is filled by histidine 299.

Belongs to the class I-like SAM-binding methyltransferase superfamily. Cation-independent O-methyltransferase family.

O-methyltransferase; part of the gene cluster that mediates the biosynthesis of a methylated derivative of known natural products orthosporin and diaporthin. Seems not to be involved in the biosynthesis of the identified final product of the pathway and its function has still to be determined. This Aspergillus oryzae (strain ATCC 42149 / RIB 40) (Yellow koji mold) protein is O-methyltransferase aoiO.